The chain runs to 274 residues: Acetyl-coenzyme A carboxylase carboxyl transferase subunit beta (274 aa).

Residues 16–274 form the CoA carboxyltransferase N-terminal domain; it reads LWTKCEECKN…LLNLLFYKNA (259 aa). Residues Cys-20, Cys-23, Cys-39, and Cys-42 each contribute to the Zn(2+) site. The C4-type zinc finger occupies 20-42; the sequence is CEECKNILLAQELETNFYVCPKC.

It belongs to the AccD/PCCB family. As to quaternary structure, acetyl-CoA carboxylase is a heterohexamer composed of biotin carboxyl carrier protein (AccB), biotin carboxylase (AccC) and two subunits each of ACCase subunit alpha (AccA) and ACCase subunit beta (AccD). Requires Zn(2+) as cofactor.

Its subcellular location is the cytoplasm. The enzyme catalyses N(6)-carboxybiotinyl-L-lysyl-[protein] + acetyl-CoA = N(6)-biotinyl-L-lysyl-[protein] + malonyl-CoA. Its pathway is lipid metabolism; malonyl-CoA biosynthesis; malonyl-CoA from acetyl-CoA: step 1/1. Its function is as follows. Component of the acetyl coenzyme A carboxylase (ACC) complex. Biotin carboxylase (BC) catalyzes the carboxylation of biotin on its carrier protein (BCCP) and then the CO(2) group is transferred by the transcarboxylase to acetyl-CoA to form malonyl-CoA. This chain is Acetyl-coenzyme A carboxylase carboxyl transferase subunit beta, found in Hydrogenobaculum sp. (strain Y04AAS1).